The chain runs to 146 residues: Large ribosomal subunit protein uL23m (146 aa).

Residues 108 to 146 form a disordered region; it reads PDLFPEKEPTSPDPLEEELPQQRQSSDPRCPGIPSWFGL.

It belongs to the universal ribosomal protein uL23 family. In terms of assembly, component of the mitochondrial ribosome large subunit (39S) which comprises a 16S rRNA and about 50 distinct proteins.

Its subcellular location is the mitochondrion. The polypeptide is Large ribosomal subunit protein uL23m (Mrpl23) (Rattus norvegicus (Rat)).